The primary structure comprises 405 residues: Opine dehydrogenase (405 aa).

Belongs to the lysopine/nopaline/octopine/opine/vitopine dehydrogenases family.

In Haliotis discus hannai (Japanese abalone), this protein is Opine dehydrogenase.